The following is a 315-amino-acid chain: Fucose-specific lectin (315 aa).

6 repeat units span residues 2–53, 54–103, 104–155, 156–207, 208–260, and 261–315. Residues 2-315 form a 6 X approximate tandem repeats region; it reads STPGAQQVLF…QLGRSALPPA (314 aa). Alpha-L-fucose-binding residues include arginine 25, glutamate 37, tryptophan 44, arginine 73, glutamate 85, tryptophan 94, glycine 98, arginine 126, glutamate 138, tryptophan 146, threonine 150, arginine 177, glutamine 189, tryptophan 198, arginine 230, and glutamine 242. Positions 244, 246, and 252 each coordinate Zn(2+). Arginine 282 and glutamate 296 together coordinate alpha-L-fucose.

It belongs to the fungal fucose-specific lectin family. Homodimer.

Functionally, multispecific lectin that is able to recognize L-fucose in all possible linkages. These could be found not only in decomposed plant matter in soil, which is the natural environment for A.fumigatus, but also in various epitopes on human tissues. Mediates binding of A.fumigatus conidia to airway mucin in a fucose dependent manner. Stimulates IL-8 production by human bronchial cells in a dose-dependent manner, contributing to the inflammatory response observed upon the exposure of a patient to A.fumigatus, and thus might be an important virulence factor involved in an early stage of A.fumigatus infection. The polypeptide is Fucose-specific lectin (Aspergillus fumigatus (strain ATCC MYA-4609 / CBS 101355 / FGSC A1100 / Af293) (Neosartorya fumigata)).